The chain runs to 469 residues: D-3-phosphoglycerate dehydrogenase 2 (469 aa).

Serine 2 carries the post-translational modification N-acetylserine. Phosphoserine is present on residues serine 22, serine 29, and serine 33. Residues 208–209, aspartate 228, 285–287, and aspartate 311 contribute to the NAD(+) site; these read HI and ASR. The active site involves arginine 287. The active site involves glutamate 316. Histidine 347 functions as the Proton donor in the catalytic mechanism. Residue 347–350 participates in NAD(+) binding; the sequence is HIGG. The ACT domain maps to 399 to 469; sequence RVLYIHRNVP…SAKVSIRLLY (71 aa).

Belongs to the D-isomer specific 2-hydroxyacid dehydrogenase family.

The enzyme catalyses (2R)-3-phosphoglycerate + NAD(+) = 3-phosphooxypyruvate + NADH + H(+). The catalysed reaction is (R)-2-hydroxyglutarate + NAD(+) = 2-oxoglutarate + NADH + H(+). It participates in amino-acid biosynthesis; L-serine biosynthesis; L-serine from 3-phospho-D-glycerate: step 1/3. Functionally, catalyzes the reversible oxidation of 3-phospho-D-glycerate to 3-phosphonooxypyruvate, the first step of the phosphorylated L-serine biosynthesis pathway. Also catalyzes the reversible oxidation of 2-hydroxyglutarate to 2-oxoglutarate. This is D-3-phosphoglycerate dehydrogenase 2 (SER33) from Saccharomyces cerevisiae (strain ATCC 204508 / S288c) (Baker's yeast).